The primary structure comprises 150 residues: FAD synthase (150 aa).

ATP is bound by residues Ala8–Phe9, His13–His16, Asp95, and His122.

The protein belongs to the archaeal FAD synthase family. Homodimer. A divalent metal cation is required as a cofactor.

The enzyme catalyses FMN + ATP + H(+) = FAD + diphosphate. It participates in cofactor biosynthesis; FAD biosynthesis; FAD from FMN: step 1/1. In terms of biological role, catalyzes the transfer of the AMP portion of ATP to flavin mononucleotide (FMN) to produce flavin adenine dinucleotide (FAD) coenzyme. In Methanobrevibacter ruminantium (strain ATCC 35063 / DSM 1093 / JCM 13430 / OCM 146 / M1) (Methanobacterium ruminantium), this protein is FAD synthase.